Here is a 393-residue protein sequence, read N- to C-terminus: Protein TsgA (393 aa).

The Cytoplasmic portion of the chain corresponds to 1–10 (MTNSNRIKLT). The helical transmembrane segment at 11-31 (WISFLSYALTGALVIVTGMVM) threads the bilayer. Topologically, residues 32–50 (GNIADYFHLPVSSMSNTFT) are periplasmic. Residues 51-71 (FLNAGILISIFLNAWLMEIVP) form a helical membrane-spanning segment. Residues 72 to 77 (LKTQLR) are Cytoplasmic-facing. The chain crosses the membrane as a helical span at residues 78 to 98 (FGFILMVLAVAGLMFSHSLAL). The Periplasmic segment spans residues 99–100 (FS). Residues 101–121 (AAMFVLGLVSGITMSIGTFLI) form a helical membrane-spanning segment. Residues 122-133 (TQLYEGRQRGSR) lie on the Cytoplasmic side of the membrane. The helical transmembrane segment at 134-154 (LLFTDSFFSMAGMIFPMVAAF) threads the bilayer. The Periplasmic segment spans residues 155-161 (LLARSIE). Residues 162–182 (WYWVYACIGLVYLAIFILTFG) form a helical membrane-spanning segment. Residues 183 to 205 (CEFPALGKHAQHSQAPVVKEKWG) lie on the Cytoplasmic side of the membrane. Residues 206–226 (IGVLFLAVAALCYILGQLGFI) form a helical membrane-spanning segment. Topologically, residues 227-244 (SWVPEYAKGLGMSLNDAG) are periplasmic. Residues 245-265 (ALVSDFWMSYMFGMWAFSFIL) traverse the membrane as a helical segment. The Cytoplasmic portion of the chain corresponds to 266-272 (RFFDLQR). A helical membrane pass occupies residues 273–293 (ILTVLAGMAAVLMYLFITGTQ). Topologically, residues 294 to 297 (AHMP) are periplasmic. The chain crosses the membrane as a helical span at residues 298-318 (WFILTLGFFSSAIYTSIITLG). The Cytoplasmic portion of the chain corresponds to 319–331 (SQQTKVASPKLVN). A helical transmembrane segment spans residues 332–352 (FILTCGTIGTMLTFVVTGPIV). Topologically, residues 353 to 360 (AHSGPQAA) are periplasmic. A helical membrane pass occupies residues 361–381 (LLTANGLYAVVFVMCFALGFV). At 382–393 (SRHRQHSSPAAH) the chain is on the cytoplasmic side.

It belongs to the major facilitator superfamily. TsgA family.

The protein localises to the cell inner membrane. In Salmonella paratyphi A (strain ATCC 9150 / SARB42), this protein is Protein TsgA.